Reading from the N-terminus, the 449-residue chain is Glucose-6-phosphate isomerase (449 aa).

Glutamate 291 (proton donor) is an active-site residue. Active-site residues include histidine 312 and lysine 426.

It belongs to the GPI family.

The protein localises to the cytoplasm. The catalysed reaction is alpha-D-glucose 6-phosphate = beta-D-fructose 6-phosphate. The protein operates within carbohydrate biosynthesis; gluconeogenesis. It functions in the pathway carbohydrate degradation; glycolysis; D-glyceraldehyde 3-phosphate and glycerone phosphate from D-glucose: step 2/4. In terms of biological role, catalyzes the reversible isomerization of glucose-6-phosphate to fructose-6-phosphate. This is Glucose-6-phosphate isomerase from Streptococcus equi subsp. zooepidemicus (strain MGCS10565).